The chain runs to 2157 residues: Mediator of RNA polymerase II transcription subunit 12-like protein (2157 aa).

Residues Met-1 to Gln-31 form a disordered region. Thr-462 bears the Phosphothreonine mark. Residues Glu-1437 to Lys-1456 are compositionally biased toward basic and acidic residues. 3 disordered regions span residues Glu-1437 to Ser-1461, Arg-1724 to Thr-1807, and Ile-2040 to Phe-2157. The segment covering Thr-1771 to Ser-1780 has biased composition (basic residues). Low complexity-rich tracts occupy residues Pro-2063 to Gln-2076, Gln-2083 to Ala-2101, and Arg-2116 to Gln-2136. Positions Lys-2137–Val-2148 are enriched in polar residues.

It belongs to the Mediator complex subunit 12 family. As to quaternary structure, may be a component of the Mediator complex, which is known to be composed of MED1, MED4, MED6, MED7, MED8, MED9, MED10, MED11, MED12, MED13, MED13L, MED14, MED15, MED16, MED17, MED18, MED19, MED20, MED21, MED22, MED23, MED24, MED25, MED26, MED27, MED29, MED30, MED31, CCNC, CDK8 and CDC2L6/CDK11. The MED12, MED13, CCNC and CDK8 subunits form a distinct module termed the CDK8 module. Mediator containing the CDK8 module is less active than Mediator lacking this module in supporting transcriptional activation. Individual preparations of the Mediator complex lacking one or more distinct subunits have been variously termed ARC, CRSP, DRIP, PC2, SMCC and TRAP.

The protein localises to the nucleus. Its function is as follows. May be a component of the Mediator complex, a coactivator involved in the regulated transcription of nearly all RNA polymerase II-dependent genes. Mediator functions as a bridge to convey information from gene-specific regulatory proteins to the basal RNA polymerase II transcription machinery. Mediator is recruited to promoters by direct interactions with regulatory proteins and serves as a scaffold for the assembly of a functional preinitiation complex with RNA polymerase II and the general transcription factors. This Mus musculus (Mouse) protein is Mediator of RNA polymerase II transcription subunit 12-like protein (Med12l).